A 322-amino-acid polypeptide reads, in one-letter code: Arginase (322 aa).

Positions 113, 141, 143, and 145 each coordinate Mn(2+). Substrate is bound by residues 143–147 (HADIN), 154–156 (SGN), and Asp-200. Asp-247 and Asp-249 together coordinate Mn(2+). Substrate contacts are provided by Thr-261 and Glu-292.

It belongs to the arginase family. As to quaternary structure, homotrimer. Requires Mn(2+) as cofactor.

It carries out the reaction L-arginine + H2O = urea + L-ornithine. The protein operates within nitrogen metabolism; urea cycle; L-ornithine and urea from L-arginine: step 1/1. This Coccidioides posadasii (strain C735) (Valley fever fungus) protein is Arginase (ARG).